The primary structure comprises 194 residues: Peptidyl-tRNA hydrolase (194 aa).

TRNA is bound at residue Y17. H22 (proton acceptor) is an active-site residue. 3 residues coordinate tRNA: Y68, N70, and N116.

This sequence belongs to the PTH family. Monomer.

The protein localises to the cytoplasm. The catalysed reaction is an N-acyl-L-alpha-aminoacyl-tRNA + H2O = an N-acyl-L-amino acid + a tRNA + H(+). Hydrolyzes ribosome-free peptidyl-tRNAs (with 1 or more amino acids incorporated), which drop off the ribosome during protein synthesis, or as a result of ribosome stalling. Its function is as follows. Catalyzes the release of premature peptidyl moieties from peptidyl-tRNA molecules trapped in stalled 50S ribosomal subunits, and thus maintains levels of free tRNAs and 50S ribosomes. The sequence is that of Peptidyl-tRNA hydrolase from Chromohalobacter salexigens (strain ATCC BAA-138 / DSM 3043 / CIP 106854 / NCIMB 13768 / 1H11).